Reading from the N-terminus, the 55-residue chain is ATP synthase F(0) complex subunit 8 (55 aa).

A helical transmembrane segment spans residues 9-29 (WFFIMIMSWAVFLLLIQPKLL).

This sequence belongs to the ATPase protein 8 family. As to quaternary structure, component of the ATP synthase complex composed at least of ATP5F1A/subunit alpha, ATP5F1B/subunit beta, ATP5MC1/subunit c (homooctomer), MT-ATP6/subunit a, MT-ATP8/subunit 8, ATP5ME/subunit e, ATP5MF/subunit f, ATP5MG/subunit g, ATP5MK/subunit k, ATP5MJ/subunit j, ATP5F1C/subunit gamma, ATP5F1D/subunit delta, ATP5F1E/subunit epsilon, ATP5PF/subunit F6, ATP5PB/subunit b, ATP5PD/subunit d, ATP5PO/subunit OSCP. ATP synthase complex consists of a soluble F(1) head domain (subunits alpha(3) and beta(3)) - the catalytic core - and a membrane F(0) domain - the membrane proton channel (subunits c, a, 8, e, f, g, k and j). These two domains are linked by a central stalk (subunits gamma, delta, and epsilon) rotating inside the F1 region and a stationary peripheral stalk (subunits F6, b, d, and OSCP).

It localises to the mitochondrion membrane. In terms of biological role, subunit 8, of the mitochondrial membrane ATP synthase complex (F(1)F(0) ATP synthase or Complex V) that produces ATP from ADP in the presence of a proton gradient across the membrane which is generated by electron transport complexes of the respiratory chain. ATP synthase complex consist of a soluble F(1) head domain - the catalytic core - and a membrane F(1) domain - the membrane proton channel. These two domains are linked by a central stalk rotating inside the F(1) region and a stationary peripheral stalk. During catalysis, ATP synthesis in the catalytic domain of F(1) is coupled via a rotary mechanism of the central stalk subunits to proton translocation. In vivo, can only synthesize ATP although its ATP hydrolase activity can be activated artificially in vitro. Part of the complex F(0) domain. In Rhea americana (Greater rhea), this protein is ATP synthase F(0) complex subunit 8.